A 118-amino-acid chain; its full sequence is Small ribosomal subunit protein uS13 (118 aa).

The segment at 95–118 is disordered; it reads LPVRGQRTRTNARTRKGPKKLINK.

The protein belongs to the universal ribosomal protein uS13 family. As to quaternary structure, part of the 30S ribosomal subunit. Forms a loose heterodimer with protein S19. Forms two bridges to the 50S subunit in the 70S ribosome.

Its function is as follows. Located at the top of the head of the 30S subunit, it contacts several helices of the 16S rRNA. In the 70S ribosome it contacts the 23S rRNA (bridge B1a) and protein L5 of the 50S subunit (bridge B1b), connecting the 2 subunits; these bridges are implicated in subunit movement. Contacts the tRNAs in the A and P-sites. The protein is Small ribosomal subunit protein uS13 of Blochmanniella floridana.